The primary structure comprises 1138 residues: Condensin-2 complex subunit G2 (1138 aa).

A Phosphoserine modification is found at Ser-30. Residues 459–497 (LLPTLRYSLHDNSEKVRVAFVDLLLKIKAVRAAKFWKIC) form an HEAT repeat. Phosphothreonine is present on Thr-1114.

In terms of assembly, component of the condensin-2 complex, which contains the SMC2 and SMC4 heterodimer, and 3 non SMC subunits that probably regulate the complex: NCAPH2, NCAPD3 and NCAPG2. Expressed in spleen, lung and testis as well as in hematopoietic cell lines.

It localises to the nucleus. Regulatory subunit of the condensin-2 complex, a complex which establishes mitotic chromosome architecture and is involved in physical rigidity of the chromatid axis. Is required for early embryonic development and is essential for viability and expansion of the inner cell mass (ICM) of the implanting blastocyst. The sequence is that of Condensin-2 complex subunit G2 (Ncapg2) from Mus musculus (Mouse).